The sequence spans 456 residues: Maturase-like protein 1 (456 aa).

It to group II intron maturases.

The protein localises to the plastid. Functionally, could be required for group III intron excision. This chain is Maturase-like protein 1 (mat1), found in Euglena longa (Euglenophycean alga).